The following is a 326-amino-acid chain: Probable cell division protein WhiA (326 aa).

Positions 275 to 308 (SLDELGRLADPVMTKDAIAGRIRRLLAMADKRAL) form a DNA-binding region, H-T-H motif.

The protein belongs to the WhiA family.

Functionally, involved in cell division and chromosome segregation. The sequence is that of Probable cell division protein WhiA from Pseudarthrobacter chlorophenolicus (strain ATCC 700700 / DSM 12829 / CIP 107037 / JCM 12360 / KCTC 9906 / NCIMB 13794 / A6) (Arthrobacter chlorophenolicus).